We begin with the raw amino-acid sequence, 262 residues long: tRNA (guanine-N(1)-)-methyltransferase (262 aa).

S-adenosyl-L-methionine-binding positions include Gly-111 and 130–135 (LGDFVL).

Belongs to the RNA methyltransferase TrmD family. Homodimer.

Its subcellular location is the cytoplasm. It carries out the reaction guanosine(37) in tRNA + S-adenosyl-L-methionine = N(1)-methylguanosine(37) in tRNA + S-adenosyl-L-homocysteine + H(+). In terms of biological role, specifically methylates guanosine-37 in various tRNAs. The sequence is that of tRNA (guanine-N(1)-)-methyltransferase from Desulfitobacterium hafniense (strain Y51).